Reading from the N-terminus, the 203-residue chain is MSKYTFTQKNFKVFEVPGLEGRMSAIESEIQPKLAALGTYFTDFLNTHTPDEFYAHIAKHARRTVNPPKDTWVAFSTNKRGYKMLPHFQIGLYEDQVFVMFGVMHEAKNKNHYIEVFEKHFDEIENLPDDYRICTDHVKMEKPLIKDLSTDELKEALHRAHQLKKGEFFIARTLSPKAPELKTDKAFKSYLEDTFDHLLKFYS.

The protein belongs to the UPF0637 family.

The chain is UPF0637 protein Sca_0732 from Staphylococcus carnosus (strain TM300).